The sequence spans 294 residues: 4-hydroxy-tetrahydrodipicolinate synthase (294 aa).

Residue T45 coordinates pyruvate. Y133 functions as the Proton donor/acceptor in the catalytic mechanism. K161 (schiff-base intermediate with substrate) is an active-site residue. I203 serves as a coordination point for pyruvate.

This sequence belongs to the DapA family. In terms of assembly, homotetramer; dimer of dimers.

Its subcellular location is the cytoplasm. It catalyses the reaction L-aspartate 4-semialdehyde + pyruvate = (2S,4S)-4-hydroxy-2,3,4,5-tetrahydrodipicolinate + H2O + H(+). The protein operates within amino-acid biosynthesis; L-lysine biosynthesis via DAP pathway; (S)-tetrahydrodipicolinate from L-aspartate: step 3/4. Functionally, catalyzes the condensation of (S)-aspartate-beta-semialdehyde [(S)-ASA] and pyruvate to 4-hydroxy-tetrahydrodipicolinate (HTPA). This Shewanella sp. (strain W3-18-1) protein is 4-hydroxy-tetrahydrodipicolinate synthase.